Consider the following 753-residue polypeptide: Polyribonucleotide nucleotidyltransferase (753 aa).

Mg(2+) contacts are provided by aspartate 543 and aspartate 549. Positions 609-668 (PRITTVKIPVAKIGELIGPKGKNINALTEETGANISIEDDGTVFISAADGASAEAAIEKI) constitute a KH domain. The region spanning 680–749 (GERFLGTVVK…NRGKISLVPV (70 aa)) is the S1 motif domain.

This sequence belongs to the polyribonucleotide nucleotidyltransferase family. The cofactor is Mg(2+).

Its subcellular location is the cytoplasm. It carries out the reaction RNA(n+1) + phosphate = RNA(n) + a ribonucleoside 5'-diphosphate. In terms of biological role, involved in mRNA degradation. Catalyzes the phosphorolysis of single-stranded polyribonucleotides processively in the 3'- to 5'-direction. The polypeptide is Polyribonucleotide nucleotidyltransferase (Corynebacterium glutamicum (strain R)).